Reading from the N-terminus, the 189-residue chain is Dirigent protein 21 (189 aa).

Residues 1 to 19 (MASLYLLLLLPLFLALILA) form the signal peptide. N-linked (GlcNAc...) asparagine glycosylation is found at N72 and N173.

It belongs to the plant dirigent protein family. In terms of assembly, homodimer.

It localises to the secreted. Dirigent proteins impart stereoselectivity on the phenoxy radical-coupling reaction, yielding optically active lignans from two molecules of coniferyl alcohol in the biosynthesis of lignans, flavonolignans, and alkaloids and thus plays a central role in plant secondary metabolism. In Arabidopsis thaliana (Mouse-ear cress), this protein is Dirigent protein 21 (DIR21).